The chain runs to 143 residues: Ribonuclease H (143 aa).

Residues 1 to 140 form the RNase H type-1 domain; it reads MKVEIYTDGA…VDALANLGIE (140 aa). Residues D8, E46, D68, and D132 each coordinate Mg(2+).

This sequence belongs to the RNase H family. In terms of assembly, monomer. It depends on Mg(2+) as a cofactor.

It localises to the cytoplasm. The catalysed reaction is Endonucleolytic cleavage to 5'-phosphomonoester.. Functionally, endonuclease that specifically degrades the RNA of RNA-DNA hybrids. In Legionella pneumophila (strain Paris), this protein is Ribonuclease H.